We begin with the raw amino-acid sequence, 137 residues long: NADH-quinone oxidoreductase subunit A (137 aa).

The next 3 helical transmembrane spans lie at 12-32 (WGFA…LGVS), 66-86 (FYLV…LFAW), and 96-116 (TGFV…VYLF).

The protein belongs to the complex I subunit 3 family. In terms of assembly, NDH-1 is composed of 13 different subunits. Subunits NuoA, H, J, K, L, M, N constitute the membrane sector of the complex.

It is found in the cell inner membrane. The catalysed reaction is a quinone + NADH + 5 H(+)(in) = a quinol + NAD(+) + 4 H(+)(out). In terms of biological role, NDH-1 shuttles electrons from NADH, via FMN and iron-sulfur (Fe-S) centers, to quinones in the respiratory chain. The immediate electron acceptor for the enzyme in this species is believed to be ubiquinone. Couples the redox reaction to proton translocation (for every two electrons transferred, four hydrogen ions are translocated across the cytoplasmic membrane), and thus conserves the redox energy in a proton gradient. The polypeptide is NADH-quinone oxidoreductase subunit A (Pseudomonas fluorescens (strain Pf0-1)).